Reading from the N-terminus, the 84-residue chain is Transcriptional regulator WhiB1 (84 aa).

A 4Fe-4S Wbl-type domain is found at 8 to 70; it reads VCRDEDPELF…GGMSEDERRA (63 aa). Positions 9, 37, 40, and 46 each coordinate [4Fe-4S] cluster.

It belongs to the WhiB family. In terms of assembly, homodimer. The cofactor is [4Fe-4S] cluster. The Fe-S cluster can be nitrosylated by nitric oxide (NO). In terms of processing, upon Fe-S cluster removal intramolecular disulfide bonds are formed.

The protein resides in the cytoplasm. Its function is as follows. Acts as a transcriptional regulator. Probably redox-responsive. The apo- but not holo-form probably binds DNA. In Mycobacterium tuberculosis (strain CDC 1551 / Oshkosh), this protein is Transcriptional regulator WhiB1 (whiB1).